The sequence spans 136 residues: Piercer of microtubule wall 1 protein (136 aa).

The disordered stretch occupies residues 1 to 24 (MAEECPRACAEPVAPKATAPPERT).

It belongs to the PIERCE1 family. As to quaternary structure, microtubule inner protein component of sperm flagellar doublet microtubules. Interacts with CFAP53, ODAD1 and ODAD3; the interactions link the outer dynein arms docking complex (ODA-DC) to the internal microtubule inner proteins (MIP) in cilium axoneme. As to expression, expressed in airway epithelial cells.

It is found in the cytoplasm. It localises to the cytoskeleton. The protein localises to the cilium axoneme. The protein resides in the flagellum axoneme. Functionally, microtubule inner protein involved in the attachment of outer dynein arms (ODAs) to dynein-decorated doublet microtubules (DMTs) in cilia axoneme, which is required for motile cilia beating. Functions at the initial step of left-right asymmetry specification of the visceral organs. The sequence is that of Piercer of microtubule wall 1 protein from Homo sapiens (Human).